A 403-amino-acid chain; its full sequence is Dihydroorotase (403 aa).

His48 and His50 together coordinate Zn(2+). Substrate-binding positions include 50–52 (HLR) and Asn82. 4 residues coordinate Zn(2+): Glu140, His172, His211, and Asp277. The active site involves Asp277. Position 281 (His281) interacts with substrate.

It belongs to the metallo-dependent hydrolases superfamily. DHOase family. Class I DHOase subfamily. The cofactor is Zn(2+).

It catalyses the reaction (S)-dihydroorotate + H2O = N-carbamoyl-L-aspartate + H(+). It functions in the pathway pyrimidine metabolism; UMP biosynthesis via de novo pathway; (S)-dihydroorotate from bicarbonate: step 3/3. Its function is as follows. Catalyzes the reversible cyclization of carbamoyl aspartate to dihydroorotate. The polypeptide is Dihydroorotase (Archaeoglobus fulgidus (strain ATCC 49558 / DSM 4304 / JCM 9628 / NBRC 100126 / VC-16)).